Here is a 449-residue protein sequence, read N- to C-terminus: GPI mannosyltransferase 2 (449 aa).

Residues 1 to 7 are Cytoplasmic-facing; it reads MTEKVTK. Residues 8-28 form a helical membrane-spanning segment; the sequence is LALASRLIVLLVQLVANGALP. The Lumenal segment spans residues 29 to 82; the sequence is EHKPDVFRMPVSSDQNASWIDKVIKRCLGGLRHWDGEYFLHIAENLYSYENTLA. N-linked (GlcNAc...) asparagine glycosylation occurs at N44. The helical transmembrane segment at 83-103 threads the bilayer; the sequence is FYPLYPVVVRHVGQAVEAIGI. Residues 104-109 are Cytoplasmic-facing; sequence SLSQES. Residues 110–130 form a helical membrane-spanning segment; that stretch reads ILLVVAVALNFWLFCESANLL. Residues 131–148 lie on the Lumenal side of the membrane; it reads FQLTQVLFNDLNKSWNAA. N-linked (GlcNAc...) asparagine glycosylation occurs at N142. A helical membrane pass occupies residues 149 to 169; that stretch reads LIYCFNPATIFFTAAYSETFF. Residues 170–196 lie on the Cytoplasmic side of the membrane; sequence AYSSLHLMLECSKPTGSFRYLRLGTAL. Residues 197–217 form a helical membrane-spanning segment; it reads AACLLCRSNGLITLGYPLYFF. Over 218-235 the chain is Lumenal; the sequence is GRQLLLKNKEPNTCMQLT. A helical transmembrane segment spans residues 236–256; sequence QMTLTILGAIGILHTYYFYIY. At 257–368 the chain is on the cytoplasmic side; sequence RLYCLPNTRP…GFKELIRDHT (112 aa). Residues 369-389 form a helical membrane-spanning segment; that stretch reads TFPFVLHAAILTLVCTVYVHI. Residues 390 to 423 lie on the Lumenal side of the membrane; sequence QVSTRLLASATPVFYWFAADHMPKTLAQLKLRSK. Residues 424 to 444 form a helical membrane-spanning segment; that stretch reads AGALFVWCTTYSLVGTVLFSN. The Cytoplasmic segment spans residues 445-449; sequence NYPWT.

This sequence belongs to the PIGV family.

Its subcellular location is the endoplasmic reticulum membrane. It participates in glycolipid biosynthesis; glycosylphosphatidylinositol-anchor biosynthesis. In terms of biological role, mannosyltransferase involved in glycosylphosphatidylinositol-anchor biosynthesis. Transfers the second mannose to the glycosylphosphatidylinositol during GPI precursor assembly. Required for the GPI-mediated endoplasmic reticulum exit and proper targeting to the cell surface of chp. Required for GPI-mediated membrane attachment of chp, qsm and Cont. Essential for microvillar stability in the rhabdomere. The polypeptide is GPI mannosyltransferase 2 (Drosophila melanogaster (Fruit fly)).